Reading from the N-terminus, the 87-residue chain is Kawaguchipeptin peptide (87 aa).

A propeptide spanning residues 1 to 33 is cleaved from the precursor; sequence MKNPTLLPKLTAPVERPAVTSSDLKQASSVDAA. Residue Trp-34 is the site of 3'-prenyl-2',N2-cyclotryptophan; partial attachment. The segment at residues 34-44 is a cross-link (cyclopeptide (Trp-Pro)); the sequence is WLNGDNNWSTP. Leu-35 is subject to D-leucine; partial. Residue Trp-41 is the site of 3'-prenyl-2',N2-cyclotryptophan; partial attachment. The propeptide occupies 45-51; it reads FAGVNAA. A lipid anchor (3'-prenyl-2',N2-cyclotryptophan; partial) is attached at Trp-52. Residues 52–62 constitute a cross-link (cyclopeptide (Trp-Pro)); the sequence is WLNGDNNWSTP. Residue Leu-53 is modified to D-leucine; partial. Trp-59 carries 3'-prenyl-2',N2-cyclotryptophan; partial lipidation. A propeptide spanning residues 63-69 is cleaved from the precursor; that stretch reads FAGVNAA. Trp-70 carries 3'-prenyl-2',N2-cyclotryptophan; partial lipidation. The cyclopeptide (Trp-Pro) cross-link spans 70-80; sequence WLNGDNNWSTP. Residue Leu-71 is modified to D-leucine; partial. The 3'-prenyl-2',N2-cyclotryptophan; partial moiety is linked to residue Trp-77. Positions 81-87 are excised as a propeptide; the sequence is FAADGAE.

Post-translationally, kawaguchipeptin A contains a D-Leu and 2 prenylated Trp, whereas kawaguchipeptin B only contains unmodified amino acids. Kawaguchipeptin A is prenylated in vivo. Upon expression in E.coli of the whole operon, Trp residues are prenylated by C-prenyltransferase KgpF. Prenylation by KgpF is likely the last enzymatic step in the biosynthetic maturation of kawaguchipeptin A.

Functionally, both kawaguchipeptin A and B, which only differ by post-translational modifications, have antibacterial activities, since they inhibit the growth of the Gram-positive bacterium S.aureus at a concentration of 1 ug/mL. This is Kawaguchipeptin peptide from Microcystis aeruginosa (strain NIES-88 / KW-MA1-3).